Here is a 293-residue protein sequence, read N- to C-terminus: uncharacterized protein (293 aa).

This is an uncharacterized protein from Treponema pallidum (strain Nichols).